Consider the following 130-residue polypeptide: T-cell receptor alpha chain V region PHDS58 (130 aa).

The signal sequence occupies residues 1 to 20 (MLLALLPVLGIHFVLRDAQA). Residues 21-114 (QSVTQPDARV…SAVYFCAVSG (94 aa)) are v segment. The N-linked (GlcNAc...) asparagine glycan is linked to asparagine 90. The interval 115–130 (FASALTFGSGTKVIVL) is j segment.

The sequence is that of T-cell receptor alpha chain V region PHDS58 from Mus musculus (Mouse).